The following is a 153-amino-acid chain: Heavy metal-associated isoprenylated plant protein 26 (153 aa).

The HMA domain occupies 25–89 (LQTVEIKVKM…MSHRTGKKVE (65 aa)). A metal cation is bound by residues Cys-36 and Cys-39. A Cysteine methyl ester modification is found at Cys-150. A lipid anchor (S-farnesyl cysteine) is attached at Cys-150. Residues 151 to 153 (VVM) constitute a propeptide, removed in mature form.

This sequence belongs to the HIPP family. As to quaternary structure, interacts with ZHD11/HB29 and ACBP2 (via ankyrin repeats). May also interact with HB21. Expressed in roots, stems and flowers. Lower expression in siliques and leaves. Expressed in the vascular tissues. Detected in lateral roots, shoot apical meristem, petals of unopened flowers and weak expression in leaf vasculature.

The protein resides in the nucleus membrane. The protein localises to the cell membrane. Functionally, heavy-metal-binding protein. Binds lead, cadmium and copper. May be involved in heavy-metal transport. May be involved in cadmium transport and play a role in cadmium detoxification. This chain is Heavy metal-associated isoprenylated plant protein 26, found in Arabidopsis thaliana (Mouse-ear cress).